Consider the following 368-residue polypeptide: Phospho-N-acetylmuramoyl-pentapeptide-transferase (368 aa).

10 consecutive transmembrane segments (helical) span residues 34-54 (GAVV…IDHL), 79-99 (TPTM…VLWA), 102-122 (LNPY…VGFY), 140-160 (ARIL…VRLG), 176-196 (LVIK…VGAG), 207-227 (GLAI…AYLA), 247-267 (LAVL…FNAP), 271-291 (IFMG…IAVA), 296-316 (IVLA…IVQV), and 345-365 (QIVI…LSTL).

This sequence belongs to the glycosyltransferase 4 family. MraY subfamily. Mg(2+) is required as a cofactor.

Its subcellular location is the cell inner membrane. The catalysed reaction is UDP-N-acetyl-alpha-D-muramoyl-L-alanyl-gamma-D-glutamyl-meso-2,6-diaminopimeloyl-D-alanyl-D-alanine + di-trans,octa-cis-undecaprenyl phosphate = di-trans,octa-cis-undecaprenyl diphospho-N-acetyl-alpha-D-muramoyl-L-alanyl-D-glutamyl-meso-2,6-diaminopimeloyl-D-alanyl-D-alanine + UMP. It functions in the pathway cell wall biogenesis; peptidoglycan biosynthesis. Functionally, catalyzes the initial step of the lipid cycle reactions in the biosynthesis of the cell wall peptidoglycan: transfers peptidoglycan precursor phospho-MurNAc-pentapeptide from UDP-MurNAc-pentapeptide onto the lipid carrier undecaprenyl phosphate, yielding undecaprenyl-pyrophosphoryl-MurNAc-pentapeptide, known as lipid I. The protein is Phospho-N-acetylmuramoyl-pentapeptide-transferase of Bradyrhizobium sp. (strain BTAi1 / ATCC BAA-1182).